The sequence spans 333 residues: Salivary glue protein Sgs-3 (333 aa).

The signal sequence occupies residues 1–23; it reads MKLTIATALVGILLIACAHVANG. Residues 51–285 are disordered; that stretch reads TCRPPTTTRC…ATARPTSKPC (235 aa). Over residues 60–73 the composition is skewed to pro residues; it reads CPPPTTTRCPPPTR. Low complexity predominate over residues 74–88; that stretch reads PAECTATTKRPTARP. The span at 89 to 277 shows a compositional bias: basic residues; that stretch reads TTKRATTRRT…TKRATTKRAT (189 aa).

The sequence is that of Salivary glue protein Sgs-3 (Sgs3) from Drosophila erecta (Fruit fly).